The sequence spans 55 residues: uncharacterized protein (55 aa).

The signal sequence occupies residues 1–19 (MQILLVVRLVLLWLGGLSA).

This is an uncharacterized protein from Orgyia pseudotsugata multicapsid polyhedrosis virus (OpMNPV).